The following is a 423-amino-acid chain: Phospholipase A1-IIalpha (423 aa).

Positions 194–217 (SAQEQVQGELKRLLELYKDEEISI) form a coiled coil. Serine 223 functions as the Acyl-ester intermediate in the catalytic mechanism. Residues serine 223, aspartate 290, and histidine 327 each act as charge relay system in the active site. The interval 399–423 (HDDDVDADDNDDSSTSNQLQELNTD) is disordered. The span at 401–410 (DDVDADDNDD) shows a compositional bias: acidic residues. Positions 411–423 (SSTSNQLQELNTD) are enriched in polar residues.

The protein belongs to the AB hydrolase superfamily. Lipase family.

It is found in the cytoplasm. In terms of biological role, acylhydrolase that catalyzes the hydrolysis of phospholipids at the sn-1 position. The polypeptide is Phospholipase A1-IIalpha (Arabidopsis thaliana (Mouse-ear cress)).